Consider the following 144-residue polypeptide: MAKKIIGYIKLQIPAGKANPSPPVGPALGQRGLNIMEFCKAFNAATQGMESGLPIPVVITAFADKSFTFVMKTPPASILLKKAAGLQKGSSNPLTNKVGKLTRAQLEEIAKTKEPDLTAADLDAAVRTIAGSARSMGLDVEGVV.

The protein belongs to the universal ribosomal protein uL11 family. In terms of assembly, part of the ribosomal stalk of the 50S ribosomal subunit. Interacts with L10 and the large rRNA to form the base of the stalk. L10 forms an elongated spine to which L12 dimers bind in a sequential fashion forming a multimeric L10(L12)X complex. One or more lysine residues are methylated.

Functionally, forms part of the ribosomal stalk which helps the ribosome interact with GTP-bound translation factors. This Neisseria gonorrhoeae (strain ATCC 700825 / FA 1090) protein is Large ribosomal subunit protein uL11.